The sequence spans 225 residues: Uridylate kinase (225 aa).

ATP is bound at residue G9–S10. Residue G44 participates in UMP binding. ATP-binding residues include G45 and R49. UMP contacts are provided by residues D66 and T114–T120. ATP is bound by residues T140, N141, Y146, and D149.

The protein belongs to the UMP kinase family. As to quaternary structure, homohexamer.

It localises to the cytoplasm. The catalysed reaction is UMP + ATP = UDP + ADP. The protein operates within pyrimidine metabolism; CTP biosynthesis via de novo pathway; UDP from UMP (UMPK route): step 1/1. Inhibited by UTP. Catalyzes the reversible phosphorylation of UMP to UDP. This is Uridylate kinase from Thermococcus gammatolerans (strain DSM 15229 / JCM 11827 / EJ3).